The following is a 487-amino-acid chain: uncharacterized protein (487 aa).

3 disordered regions span residues 35–153 (VSRK…SGDQ), 237–345 (NTTK…AKAL), and 358–395 (QKRK…SSAA). Acidic residues predominate over residues 54–96 (FDQEDILDTVPEQTDENEDEAGDDELESEKEELDYDEEEDDED). Over residues 97–132 (RRERTSRYTSEKKGSRKDSVEGDENKKENGQDETKR) the composition is skewed to basic and acidic residues. The segment covering 241–253 (SKSRGRDTRKRRS) has biased composition (basic residues). Over residues 254–264 (SSYSSTSSSSD) the composition is skewed to low complexity. 2 stretches are compositionally biased toward basic and acidic residues: residues 273 to 338 (SRSD…KHSA) and 358 to 383 (QKRK…KKEV). The segment covering 385–395 (TTVSTNTSSAA) has biased composition (low complexity).

This is an uncharacterized protein from Caenorhabditis elegans.